The following is a 309-amino-acid chain: Isopentenyl-diphosphate Delta-isomerase II (309 aa).

K112 serves as a coordination point for substrate. Mg(2+)-binding residues include H116 and H128. Positions 126-278 (LLHRAFSVFL…GLKLSPWFRL (153 aa)) constitute a Nudix hydrolase domain. 2 residues coordinate substrate: R147 and K151. C163 is a catalytic residue. Substrate is bound at residue S164. E223 and E225 together coordinate Mg(2+). E225 is a catalytic residue.

The protein belongs to the IPP isomerase type 1 family. It depends on Mg(2+) as a cofactor.

The catalysed reaction is isopentenyl diphosphate = dimethylallyl diphosphate. It participates in isoprenoid biosynthesis; dimethylallyl diphosphate biosynthesis; dimethylallyl diphosphate from isopentenyl diphosphate: step 1/1. Its pathway is porphyrin-containing compound metabolism; chlorophyll biosynthesis. Functionally, catalyzes the 1,3-allylic rearrangement of the homoallylic substrate isopentenyl (IPP) to its highly electrophilic allylic isomer, dimethylallyl diphosphate (DMAPP). This Camptotheca acuminata (Happy tree) protein is Isopentenyl-diphosphate Delta-isomerase II (IPI2).